The primary structure comprises 470 residues: Uronate isomerase (470 aa).

It belongs to the metallo-dependent hydrolases superfamily. Uronate isomerase family.

The catalysed reaction is D-glucuronate = D-fructuronate. It carries out the reaction aldehydo-D-galacturonate = keto-D-tagaturonate. The protein operates within carbohydrate metabolism; pentose and glucuronate interconversion. The protein is Uronate isomerase of Sphingopyxis alaskensis (strain DSM 13593 / LMG 18877 / RB2256) (Sphingomonas alaskensis).